The primary structure comprises 359 residues: Replication-associated protein (359 aa).

The 104-residue stretch at 18–121 (RHRNANTFLT…PKDKWEKGTY (104 aa)) folds into the CRESS-DNA virus Rep endonuclease domain. An RCR-1 motif is present at residues 25–28 (FLTY). Residues E59, H67, and H69 each coordinate a divalent metal cation. The RCR-2 motif lies at 67–69 (HCH). Y107 functions as the For DNA cleavage activity in the catalytic mechanism. The RCR-3 motif lies at 107–110 (YILK). D111 contributes to the a divalent metal cation binding site. Residues 181–193 (SASRLFPDIAEPY) form an oligomerization region. Residue 235–242 (GPTRTGKT) participates in ATP binding. The tract at residues 258 to 276 (IDWSSYDEEAQYNVVDDIP) is transactivation. A Nuclear localization signal motif is present at residues 298–309 (KYGKRRKVASKS).

The protein belongs to the geminiviridae Rep protein family. As to quaternary structure, homooligomer. Rep binds to repeated DNA motifs (iterons). Forms the O-complex, which is a Rep-DNA complex involved in the initiation of RCR. Part of the C- and V-complexes which are RepA-Rep-DNA complexes involved in the c-sense and v-sense transcription. Mg(2+) is required as a cofactor. Mn(2+) serves as cofactor.

The protein resides in the host nucleus. In terms of biological role, essential for the replication of viral ssDNA. The closed circular ssDNA genome is first converted to a superhelical dsDNA. Rep binds a specific region at the genome origin of replication. It introduces an endonucleolytic nick within the conserved sequence 5'-TAATATTAC-3' in the intergenic region of the genome present in all geminiviruses, thereby initiating the rolling circle replication (RCR). Following cleavage, binds covalently to the 5'-phosphate of DNA as a tyrosyl ester. The cleavage gives rise to a free 3'-OH that serves as a primer for the cellular DNA polymerase. The polymerase synthesizes the (+) strand DNA by rolling circle mechanism. After one round of replication, a Rep-catalyzed nucleotidyl transfer reaction releases a circular single-stranded virus genome, thereby terminating the replication. Displays origin-specific DNA cleavage, nucleotidyl transferase, ATPase and helicase activities. Acts as an inhibitor of C-sense gene transcription. The polypeptide is Replication-associated protein (Megathyrsus maximus (PanSV)).